A 158-amino-acid chain; its full sequence is Putative pre-16S rRNA nuclease (158 aa).

The interval 138 to 158 (ELKPAQQTASRSGAGAGDGGS) is disordered.

This sequence belongs to the YqgF nuclease family.

The protein localises to the cytoplasm. Its function is as follows. Could be a nuclease involved in processing of the 5'-end of pre-16S rRNA. This Synechococcus sp. (strain CC9605) protein is Putative pre-16S rRNA nuclease.